The following is a 510-amino-acid chain: Putative glycerol-3-phosphate transporter 3 (510 aa).

The next 12 membrane-spanning stretches (helical) occupy residues 31–51 (LSFK…YIAF), 91–111 (ALLG…MFVA), 123–143 (FLTI…VAFW), 158–178 (LAGW…GNWF), 185–205 (VIMG…TLIA), 217–237 (FVGP…FLPV), 279–299 (VGFL…CLFF), 331–351 (GNLS…AGYF), 355–375 (LDGR…ALFL), 378–398 (IYGH…GLFV), 436–456 (TGSV…AISW), and 459–479 (VFYM…TLII).

Belongs to the major facilitator superfamily. Organophosphate:Pi antiporter (OPA) (TC 2.A.1.4) family.

Its subcellular location is the membrane. In Arabidopsis thaliana (Mouse-ear cress), this protein is Putative glycerol-3-phosphate transporter 3.